The primary structure comprises 163 residues: RxLR effector protein PITG_13625 (163 aa).

The N-terminal stretch at 1–23 (MKVSKAIVALAALCMALLAPAAG) is a signal peptide. A RxLR-dEER motif is present at residues 37 to 52 (RHLRQESAELATTPEE).

It belongs to the RxLR effector family.

The protein localises to the secreted. Its subcellular location is the host cell membrane. Its function is as follows. Effector that enhances P.infestans colonization of Nicotiana benthamiana leaves. The chain is RxLR effector protein PITG_13625 from Phytophthora infestans (strain T30-4) (Potato late blight agent).